Consider the following 1507-residue polypeptide: Nonribosomal peptide synthetase ataP (1507 aa).

One can recognise a Carrier 1 domain in the interval 1 to 72 (MQINIRNEIA…DIISRSTGMY (72 aa)). An O-(pantetheine 4'-phosphoryl)serine modification is found at Ser-33. Positions 98 to 119 (TPSPSPSGPSTGCPTPDTLDTT) are disordered. Residues 105 to 115 (GPSTGCPTPDT) show a composition bias toward low complexity. The interval 163–429 (TRMAWQQVLE…NRVFRQLVQL (267 aa)) is condensation 1. An adenylation region spans residues 514–893 (AAAENPEACA…GRNDRQIKLR (380 aa)). The Carrier 2 domain maps to 988-1065 (NEMSPTEQRV…DLSQRIDKLQ (78 aa)). The residue at position 1025 (Ser-1025) is an O-(pantetheine 4'-phosphoryl)serine. The segment at 1099–1471 (TSNTSFTVSF…MTALRLLIKN (373 aa)) is condensation 2.

It belongs to the NRP synthetase family.

Its pathway is mycotoxin biosynthesis. Functionally, nonribosomal peptide synthetase; part of the gene cluster that mediates the biosynthesis of acetylaranotin, a member of the epipolythiodioxopiperazine (ETP) class of toxins characterized by a disulfide-bridged cyclic dipeptide. The first step of acetylaranotin biosynthesis is performed by the NRPS ataP which produces diketopiperazine cyclo-L-Phe-L-Phe via the condensation of 2 phenylalanines (L-Phe). The ataC domain of ataTC then catalyzes the formation of bishydroxylation of cyclo-L-Phe-L-Phe. The glutathione S-transferase domain ataG in ataIMG further catalyzes the conjugation of two glutathiones to the bishydroxylated intermediate. Next, the dipeptidase ataJ removes the Glu residues. The following step is performed by the carbon sulfur lyase domain ataI of ataIMG which may convert the bis-cysteinyl adduct to yield an epidithiol intermediate. The ataT domain from ataTC then catalyzes the oxidation of the free dithiols, followed by a cyclization step catalyzed by the cytochrome P450 ataF. AtaF probably acts as an epoxidase to promote a dual epoxidation formation at C8 and C9 along with C8' and C9', followed by the spontaneous nucleophilic attack of the amide nitrogens N10 and N10' to yield an intermediate with the pyrrolidine partial structure. The final steps of acetylaranotin biosynthesis involve the acetylation and ring rearrangement of an epitetrathiodiketopiperazine intermediate to produce acetylaranotin. AtaH probably catalyzes the acetylation of epitetrathiodiketopiperazine to produce a diacetate and ataY is responsible for the formation of the dihydrooxepin moiety that converts the diacetate intermediate to acetylaranotin via acetylapoaranotin. Both enzymes could function independently in the absence of the other. The acetylaranotin bis-thiomethyltransferase ataS located outside of acetylaranotin gene cluster is the main thiomethyltransferase responsible for converting acetylaranotin and its related intermediates to their methylated forms. The protein is Nonribosomal peptide synthetase ataP of Aspergillus terreus (strain NIH 2624 / FGSC A1156).